A 487-amino-acid chain; its full sequence is NADH-quinone oxidoreductase subunit N (487 aa).

The next 14 membrane-spanning stretches (helical) occupy residues 12–32 (VLILPEILIALGIMALLLIGV), 40–60 (LTVTGLTIALLFATIILIVLF), 79–99 (YMKILTLIGALFSLILSVGFS), 104–124 (FDIFEFPILVLLATLGMMLMI), 129–149 (MLSLYMGLELQSLALYVLAAI), 164–184 (FVLGALSSGLLLYGISLLYGF), 201–221 (ILHLGVIFGIVFILAGLAFKI), 248–268 (APKIAAMALIIRVIVFAFIPL), 281–301 (ILIFMAISSMALGAFAAIGQT), 310–330 (SSIGHMGYALVGLAAGNILGV), 332–352 (GILIYMTIYLGMTIGSFAFIL), 378–398 (AIVMTIQLFSLASIPPMAGFF), 411–431 (GLVPLAIVGMVLSVIGAFYYL), and 455–475 (LCLCLSALFVLFYVFFGFWFS).

This sequence belongs to the complex I subunit 2 family. In terms of assembly, NDH-1 is composed of 14 different subunits. Subunits NuoA, H, J, K, L, M, N constitute the membrane sector of the complex.

It is found in the cell inner membrane. The enzyme catalyses a quinone + NADH + 5 H(+)(in) = a quinol + NAD(+) + 4 H(+)(out). In terms of biological role, NDH-1 shuttles electrons from NADH, via FMN and iron-sulfur (Fe-S) centers, to quinones in the respiratory chain. The immediate electron acceptor for the enzyme in this species is believed to be ubiquinone. Couples the redox reaction to proton translocation (for every two electrons transferred, four hydrogen ions are translocated across the cytoplasmic membrane), and thus conserves the redox energy in a proton gradient. This Bartonella bacilliformis (strain ATCC 35685 / KC583 / Herrer 020/F12,63) protein is NADH-quinone oxidoreductase subunit N.